The sequence spans 248 residues: Pyruvate formate-lyase-activating enzyme (248 aa).

The Radical SAM core domain occupies 17–248 (VDGPGIRFIV…NKILETSSYK (232 aa)). 3 residues coordinate [4Fe-4S] cluster: Cys-31, Cys-35, and Cys-38. S-adenosyl-L-methionine contacts are provided by residues 37–39 (FCH), Gly-80, 135–137 (DIK), and His-208.

Belongs to the organic radical-activating enzymes family. Requires [4Fe-4S] cluster as cofactor.

Its subcellular location is the cytoplasm. The catalysed reaction is glycyl-[formate C-acetyltransferase] + reduced [flavodoxin] + S-adenosyl-L-methionine = glycin-2-yl radical-[formate C-acetyltransferase] + semiquinone [flavodoxin] + 5'-deoxyadenosine + L-methionine + H(+). Activation of pyruvate formate-lyase under anaerobic conditions by generation of an organic free radical, using S-adenosylmethionine and reduced flavodoxin as cosubstrates to produce 5'-deoxy-adenosine. In Listeria innocua serovar 6a (strain ATCC BAA-680 / CLIP 11262), this protein is Pyruvate formate-lyase-activating enzyme (pflA).